We begin with the raw amino-acid sequence, 143 residues long: Snake venom vascular endothelial growth factor toxin (143 aa).

The signal sequence occupies residues 1–24 (MAAYLLAVAILFCIQGWPSATVQG). Pyrrolidone carboxylic acid is present on Gln25. Cystine bridges form between Cys38–Cys80, Cys69–Cys115, and Cys73–Cys117. Positions 115 to 143 (CECRPRSPGDVNNGRNPEEGEPRARFPFV) are disordered. Residues 130–143 (NPEEGEPRARFPFV) show a composition bias toward basic and acidic residues.

The protein belongs to the PDGF/VEGF growth factor family. Snake venom VEGF subfamily. Homodimer; disulfide-linked. Interacts with VEGF receptor-2 (KDR). The N-terminus is blocked for N-terminal sequencing, suggesting a Pyrrolidone carboxylic acid at Gln-25. Expressed by the venom gland.

The protein resides in the secreted. Functionally, snake venom VEGFs that may contribute to venom dispersion and prey subjugation by inducing vascular permeability and hypotension. This protein induces an increase in capillary permeability when intradermally injected into mice. Also provokes a drastic hypotensive effect after intravenous injection. The hypotension is mediated by nitric oxide (NO), which is produced by VEGF-activated endothelium NO synthase. Also induces angiogenesis in vitro. Unlike other crotalid VEGFs, this protein interacts with VEGF receptor-2 (KDR) with a high affinity (Kd=413 pM), whereas no interaction is detected with VEGF receptor-1 (FLT1). This Protobothrops jerdonii (Jerdon's pitviper) protein is Snake venom vascular endothelial growth factor toxin.